The following is a 277-amino-acid chain: Cis-2,3-dihydrobiphenyl-2,3-diol dehydrogenase (277 aa).

NAD(+)-binding positions include 9–36 and D59; that span reads LITG…AVLD. Position 142 (S142) interacts with substrate. The active-site Proton acceptor is the Y155. K159 is an NAD(+) binding site.

It belongs to the short-chain dehydrogenases/reductases (SDR) family.

It catalyses the reaction (2R,3S)-3-phenylcyclohexa-3,5-diene-1,2-diol + NAD(+) = biphenyl-2,3-diol + NADH + H(+). It participates in xenobiotic degradation; biphenyl degradation; 2-hydroxy-2,4-pentadienoate and benzoate from biphenyl: step 2/4. The sequence is that of Cis-2,3-dihydrobiphenyl-2,3-diol dehydrogenase (bphB) from Paraburkholderia xenovorans (strain LB400).